The primary structure comprises 142 residues: Phenylalanine ammonia-lyase (142 aa).

(E)-cinnamate is bound by residues Lys66, Glu94, and Asn97.

This sequence belongs to the PAL/histidase family. In terms of assembly, homotetramer. In terms of processing, contains an active site 4-methylidene-imidazol-5-one (MIO), which is formed autocatalytically by cyclization and dehydration of residues Ala-Ser-Gly.

Its subcellular location is the cytoplasm. It catalyses the reaction L-phenylalanine = (E)-cinnamate + NH4(+). It functions in the pathway phenylpropanoid metabolism; trans-cinnamate biosynthesis; trans-cinnamate from L-phenylalanine: step 1/1. Catalyzes the non-oxidative deamination of L-phenylalanine to form trans-cinnamic acid and a free ammonium ion. Facilitates the commitment step in phenylpropanoid pathways that produce secondary metabolites such as lignins, coumarins and flavonoids. The polypeptide is Phenylalanine ammonia-lyase (palA) (Agaricus bisporus (White button mushroom)).